We begin with the raw amino-acid sequence, 464 residues long: Growth hormone-releasing hormone receptor (464 aa).

Positions 1–22 are cleaved as a signal peptide; it reads MDSLLWATWVLCLLNLWGVALG. At 23–130 the chain is on the extracellular side; that stretch reads HLHLECDFIT…EEKSYFSTVK (108 aa). Cystine bridges form between C41-C64, C55-C96, and C78-C112. A glycan (N-linked (GlcNAc...) asparagine) is linked at N50. A helical transmembrane segment spans residues 131-151; sequence IIYTTGHSISIVALCVAIAIL. The Cytoplasmic portion of the chain corresponds to 152–167; it reads VALRRLHCPRNYIHTQ. Residues 168–188 traverse the membrane as a helical segment; it reads LFATFILKASAVFLKDAAVFQ. The Extracellular segment spans residues 189-210; that stretch reads GDSTDHCSMSTILCKVSVAVSH. The chain crosses the membrane as a helical span at residues 211–231; sequence FATMTNFSWLLAEAVYLSCLL. Residues 232-240 are Cytoplasmic-facing; it reads ASTSPRSKP. The chain crosses the membrane as a helical span at residues 241 to 261; sequence AFWWLVLAGWGLPVLCTGTWV. Topologically, residues 262 to 283 are extracellular; it reads GCKLAFEDTACWDLDDSSPYWW. The chain crosses the membrane as a helical span at residues 284–304; sequence IIKGPIVLSVGVNFGLFLNII. The Cytoplasmic segment spans residues 305-372; it reads CILLRKLGPA…QLPWRLSKST (68 aa). The chain crosses the membrane as a helical span at residues 373–393; it reads LLLIPLFGIHYIIFNFLPDSA. The Extracellular portion of the chain corresponds to 394 to 398; sequence GLGIR. Residues 399 to 419 traverse the membrane as a helical segment; that stretch reads LPLELGLGSFQGFVVAVLYCF. At 420-464 the chain is on the cytoplasmic side; that stretch reads LNQEVRTEISRKWYGHDPELLPARRTCTEWTTPPRSRVKVLTSEC.

This sequence belongs to the G-protein coupled receptor 2 family. Pituitary gland.

It localises to the cell membrane. In terms of biological role, receptor for GRF, coupled to G proteins which activate adenylyl cyclase. Stimulates somatotroph cell growth, growth hormone gene transcription and growth hormone secretion. The polypeptide is Growth hormone-releasing hormone receptor (Ghrhr) (Rattus norvegicus (Rat)).